We begin with the raw amino-acid sequence, 186 residues long: Ribosome-recycling factor (186 aa).

The segment at 140–163 is disordered; sequence LKKAEKDGDIGQDEGRSLSERVQK.

It belongs to the RRF family.

The protein localises to the cytoplasm. Its function is as follows. Responsible for the release of ribosomes from messenger RNA at the termination of protein biosynthesis. May increase the efficiency of translation by recycling ribosomes from one round of translation to another. This chain is Ribosome-recycling factor, found in Rhizobium rhizogenes (strain K84 / ATCC BAA-868) (Agrobacterium radiobacter).